The chain runs to 1358 residues: Xanthine dehydrogenase (1358 aa).

Residues 18-107 (NQLLFFLNGE…GMAVTTIEGL (90 aa)) form the 2Fe-2S ferredoxin-type domain. [2Fe-2S] cluster contacts are provided by Cys56, Cys61, Cys64, Cys89, Cys129, Cys132, Cys164, and Cys166. The region spanning 253–447 (FTGSRVTWYT…ESVFIPYTRP (195 aa)) is the FAD-binding PCMH-type domain. Residues 281–288 (IVVGNTEI), Phe366, 376–380 (SIGGN), Asp389, Leu437, and Lys455 contribute to the FAD site. Positions 805 and 836 each coordinate Mo-molybdopterin. Glu840 and Arg918 together coordinate substrate. Arg950 is a binding site for Mo-molybdopterin. Substrate-binding residues include Tyr952 and Thr1048. Ala1117 contributes to the Mo-molybdopterin binding site. Glu1302 acts as the Proton acceptor in catalysis.

This sequence belongs to the xanthine dehydrogenase family. Homodimer. Requires FAD as cofactor. It depends on Mo-molybdopterin as a cofactor. [2Fe-2S] cluster is required as a cofactor.

Its subcellular location is the peroxisome. It carries out the reaction xanthine + NAD(+) + H2O = urate + NADH + H(+). The enzyme catalyses hypoxanthine + NAD(+) + H2O = xanthine + NADH + H(+). Its function is as follows. Key enzyme in purine degradation. Catalyzes the oxidation of hypoxanthine to xanthine. Catalyzes the oxidation of xanthine to uric acid. This chain is Xanthine dehydrogenase (xdh), found in Dictyostelium discoideum (Social amoeba).